The following is a 427-amino-acid chain: UDP-N-acetylglucosamine 1-carboxyvinyltransferase (427 aa).

Phosphoenolpyruvate is bound at residue 22-23 (KN). Arginine 92 contributes to the UDP-N-acetyl-alpha-D-glucosamine binding site. Residue aspartate 116 is the Proton donor of the active site. Aspartate 312 and methionine 334 together coordinate UDP-N-acetyl-alpha-D-glucosamine.

The protein belongs to the EPSP synthase family. MurA subfamily.

It is found in the cytoplasm. It catalyses the reaction phosphoenolpyruvate + UDP-N-acetyl-alpha-D-glucosamine = UDP-N-acetyl-3-O-(1-carboxyvinyl)-alpha-D-glucosamine + phosphate. It functions in the pathway cell wall biogenesis; peptidoglycan biosynthesis. In terms of biological role, cell wall formation. Adds enolpyruvyl to UDP-N-acetylglucosamine. The polypeptide is UDP-N-acetylglucosamine 1-carboxyvinyltransferase (Borrelia garinii subsp. bavariensis (strain ATCC BAA-2496 / DSM 23469 / PBi) (Borreliella bavariensis)).